We begin with the raw amino-acid sequence, 103 residues long: Large ribosomal subunit protein bL21 (103 aa).

It belongs to the bacterial ribosomal protein bL21 family. Part of the 50S ribosomal subunit. Contacts protein L20.

Its function is as follows. This protein binds to 23S rRNA in the presence of protein L20. The protein is Large ribosomal subunit protein bL21 of Polynucleobacter necessarius subsp. necessarius (strain STIR1).